We begin with the raw amino-acid sequence, 333 residues long: Protein FLAP1 homolog A (333 aa).

A helical membrane pass occupies residues 26-46 (VVIIFVLAFTLVFTPTFEAEA). Residues 53-74 (IGGGSFRAPSAPSRSYSGPSGG) are disordered. Over residues 58–70 (FRAPSAPSRSYSG) the composition is skewed to low complexity. 2 helical membrane passes run 92–112 (IIPF…LVMI) and 261–281 (GEYI…LPAV).

It belongs to the FLAP family.

It localises to the cellular thylakoid membrane. Its subcellular location is the cell inner membrane. Functionally, essential for photosynthetic growth under fluctuating light by modulating PxcA- and PxcL-dependent intracellular pH regulation via proton transport (e.g. transient pH reduction upon transition from dark to light followed by an increase in the light until light-to-dark shift). The chain is Protein FLAP1 homolog A from Synechocystis sp. (strain ATCC 27184 / PCC 6803 / Kazusa).